A 752-amino-acid chain; its full sequence is Glutamate carboxypeptidase 2 (752 aa).

Residues methionine 1 to arginine 19 lie on the Cytoplasmic side of the membrane. Serine 10 carries the post-translational modification Phosphoserine. Residues tryptophan 20–isoleucine 44 traverse the membrane as a helical; Signal-anchor for type II membrane protein segment. Topologically, residues lysine 45 to aspartate 752 are extracellular. N-linked (GlcNAc...) asparagine glycosylation is found at asparagine 48, asparagine 78, asparagine 123, asparagine 155, and asparagine 197. Residues arginine 212 and asparagine 259 each coordinate substrate. Residues threonine 271 and tyrosine 274 each coordinate Ca(2+). The interval alanine 276–leucine 589 is NAALADase. Asparagine 338 carries an N-linked (GlcNAc...) asparagine glycan. Positions 379 and 389 each coordinate Zn(2+). Glutamate 426 provides a ligand contact to substrate. Catalysis depends on glutamate 426, which acts as the Nucleophile; for NAALADase activity. Glutamate 427 contributes to the Zn(2+) binding site. Residues glutamate 435 and glutamate 438 each contribute to the Ca(2+) site. Aspartate 455 is a binding site for Zn(2+). Asparagine 461 and asparagine 478 each carry an N-linked (GlcNAc...) asparagine glycan. Substrate contacts are provided by residues serine 519–glycine 520, asparagine 521, arginine 536–arginine 538, tyrosine 554, and tyrosine 554–histidine 555. Histidine 555 contacts Zn(2+). Asparagine 615 is a glycosylation site (N-linked (GlcNAc...) asparagine). The active-site Charge relay system is serine 630. Asparagine 640 is a glycosylation site (N-linked (GlcNAc...) asparagine). Residues aspartate 668 and histidine 691 each act as charge relay system in the active site. Lysine 701–tyrosine 702 is a substrate binding site.

This sequence belongs to the peptidase M28 family. M28B subfamily. In terms of assembly, homodimer. Requires Zn(2+) as cofactor. In terms of tissue distribution, widely expressed throughout brain regions with highest levels in the hippocampus, dentate gyrus, priform cortex, choroid plexus of ventricles, pineal gland, anterior lobe of the pituitary gland and supraoptic nucleus. High levels also found in the cerebral cortex, substantia nigra, pontine nucleus and the granule cell layer of cerebellum. Highly expressed in astrocytes and non-myelinating Schwann cells. Also expressed in kidney, localizing to the proximal brush border of the renal tube.

Its subcellular location is the cell membrane. The catalysed reaction is Release of an unsubstituted, C-terminal glutamyl residue, typically from Ac-Asp-Glu or folylpoly-gamma-glutamates.. With respect to regulation, the NAALADase activity is inhibited by beta-NAAG, quisqualic acid and 2-(phosphonomethyl)glutaric acid (PMG). In terms of biological role, has both folate hydrolase and N-acetylated-alpha-linked-acidic dipeptidase (NAALADase) activity. Has a preference for tri-alpha-glutamate peptides. In the intestine, required for the uptake of folate. In the brain, modulates excitatory neurotransmission through the hydrolysis of the neuropeptide, N-aceylaspartylglutamate (NAAG), thereby releasing glutamate. Also exhibits a dipeptidyl-peptidase IV type activity. In vitro, cleaves Gly-Pro-AMC. The polypeptide is Glutamate carboxypeptidase 2 (Folh1) (Rattus norvegicus (Rat)).